A 411-amino-acid polypeptide reads, in one-letter code: 2,3-bisphosphoglycerate-independent phosphoglycerate mutase (411 aa).

The protein belongs to the BPG-independent phosphoglycerate mutase family. A-PGAM subfamily.

It catalyses the reaction (2R)-2-phosphoglycerate = (2R)-3-phosphoglycerate. The protein operates within carbohydrate degradation; glycolysis; pyruvate from D-glyceraldehyde 3-phosphate: step 3/5. Its function is as follows. Catalyzes the interconversion of 2-phosphoglycerate and 3-phosphoglycerate. The sequence is that of 2,3-bisphosphoglycerate-independent phosphoglycerate mutase from Pyrobaculum arsenaticum (strain DSM 13514 / JCM 11321 / PZ6).